The chain runs to 153 residues: Ribosome maturation factor RimP (153 aa).

It belongs to the RimP family.

It is found in the cytoplasm. Required for maturation of 30S ribosomal subunits. The protein is Ribosome maturation factor RimP of Desulforamulus reducens (strain ATCC BAA-1160 / DSM 100696 / MI-1) (Desulfotomaculum reducens).